Reading from the N-terminus, the 233-residue chain is Small heat shock protein hspF (233 aa).

In terms of domain architecture, sHSP spans 129–233; the sequence is IPLFTFFEPL…ILLITVNKFL (105 aa).

It belongs to the small heat shock protein (HSP20) family.

This Dictyostelium discoideum (Social amoeba) protein is Small heat shock protein hspF (hspF-1).